The sequence spans 484 residues: Membrane-bound lytic murein transglycosylase F (484 aa).

Residues 1-18 form the signal peptide; the sequence is MKGLLLRIIAAFALVLWA. The non-LT domain stretch occupies residues 19 to 267; that stretch reads IDMVFPWQQM…RIEEKYFNHF (249 aa). Residues 268–484 form an LT domain region; that stretch reads SQFDYVDMRQ…PLTDNQEKQE (217 aa). The active site involves Glu312. The tract at residues 459-484 is disordered; it reads ADNKDKPSETDENLPLPLTDNQEKQE.

The protein in the N-terminal section; belongs to the bacterial solute-binding protein 3 family. It in the C-terminal section; belongs to the transglycosylase Slt family.

It is found in the cell outer membrane. The catalysed reaction is Exolytic cleavage of the (1-&gt;4)-beta-glycosidic linkage between N-acetylmuramic acid (MurNAc) and N-acetylglucosamine (GlcNAc) residues in peptidoglycan, from either the reducing or the non-reducing ends of the peptidoglycan chains, with concomitant formation of a 1,6-anhydrobond in the MurNAc residue.. Its function is as follows. Murein-degrading enzyme that degrades murein glycan strands and insoluble, high-molecular weight murein sacculi, with the concomitant formation of a 1,6-anhydromuramoyl product. Lytic transglycosylases (LTs) play an integral role in the metabolism of the peptidoglycan (PG) sacculus. Their lytic action creates space within the PG sacculus to allow for its expansion as well as for the insertion of various structures such as secretion systems and flagella. This Mannheimia succiniciproducens (strain KCTC 0769BP / MBEL55E) protein is Membrane-bound lytic murein transglycosylase F.